A 397-amino-acid polypeptide reads, in one-letter code: Subtilisin-like protease 3 (397 aa).

Positions 1–19 (MGCIKVISVFLAAIAAVDA) are cleaved as a signal peptide. A propeptide spanning residues 20-116 (RAFFHNRGGN…VEHDRVVKLA (97 aa)) is cleaved from the precursor. The region spanning 35–116 (SYIVVMKDGV…VEHDRVVKLA (82 aa)) is the Inhibitor I9 domain. The Peptidase S8 domain maps to 126–397 (TWGLGRVSHK…NRLLYNGSGR (272 aa)). Active-site charge relay system residues include D158 and H189. N250 carries an N-linked (GlcNAc...) asparagine glycan. S344 serves as the catalytic Charge relay system. An N-linked (GlcNAc...) asparagine glycan is attached at N393.

This sequence belongs to the peptidase S8 family.

Its subcellular location is the secreted. Secreted subtilisin-like serine protease with keratinolytic activity that contributes to pathogenicity. The chain is Subtilisin-like protease 3 (SUB3) from Arthroderma benhamiae (strain ATCC MYA-4681 / CBS 112371) (Trichophyton mentagrophytes).